The primary structure comprises 873 residues: Zinc fingers and homeoboxes protein 1 (873 aa).

The disordered stretch occupies residues 24–63; the sequence is LISDLDEGPPVLTPVENTRAESISSDEEVHESVDSDNQQN. A Phosphothreonine modification is found at T36. 3 positions are modified to phosphoserine: S45, S47, and S48. 2 consecutive C2H2-type zinc fingers follow at residues 70–93 and 102–125; these read YECK…DSEH and YVCV…LKYH. K159 participates in a covalent cross-link: Glycyl lysine isopeptide (Lys-Gly) (interchain with G-Cter in SUMO2). The segment at 200–236 is disordered; sequence HNSVEDVPEEKENEIKPDREEIVENPSSSASESNTST. Residue S202 is modified to Phosphoserine. Positions 212 to 221 are enriched in basic and acidic residues; it reads NEIKPDREEI. Over residues 223 to 236 the composition is skewed to low complexity; sequence ENPSSSASESNTST. The interval 272–432 is required for dimerization; the sequence is NSNLIPKVLI…QNNIQKSQVP (161 aa). Residues 272–564 form a required for interaction with NFYA region; that stretch reads NSNLIPKVLI…AQPKQSWNPF (293 aa). Positions 284–346 form a DNA-binding region, homeobox 1; the sequence is NSIPTYNAAL…LKHGVSWTPE (63 aa). Residues K441, K454, K485, and K629 each participate in a glycyl lysine isopeptide (Lys-Gly) (interchain with G-Cter in SUMO2) cross-link. DNA-binding regions (homeobox) lie at residues 464-526 and 569-630; these read SFGI…KSNQ and PQKF…EEKM. Disordered regions lie at residues 626–667 and 732–769; these read KEEK…ICKK and SSMN…INNW. S648 carries the phosphoserine modification. The homeobox 4 DNA-binding region spans 660–722; it reads STGKICKKTP…YAWKNGNLKW (63 aa). The interval 734-768 is required for nuclear localization; the sequence is MNGLSSLRKRGRGRPKGRGRGRPRGRPRGSKRINN. The span at 740 to 764 shows a compositional bias: basic residues; it reads LRKRGRGRPKGRGRGRPRGRPRGSK. The residue at position 774 (S774) is a Phosphoserine. Residues 777 to 832 constitute a DNA-binding region (homeobox 5); the sequence is KFKTGTAILKDYYLKHKFLNEQDLDELVNKSHMGYEQVREWFAERQRRSELGIELF. Residues 829 to 873 form a disordered region; sequence IELFEENEEEDEVIDDQEEDEEETDDSDTWEPPRHVKRKLSKSDD. The span at 831-857 shows a compositional bias: acidic residues; that stretch reads LFEENEEEDEVIDDQEEDEEETDDSDT. Residues 831 to 873 are required for repressor activity; it reads LFEENEEEDEVIDDQEEDEEETDDSDTWEPPRHVKRKLSKSDD. A compositionally biased stretch (basic residues) spans 863–873; it reads HVKRKLSKSDD.

Belongs to the ZHX family. As to quaternary structure, forms homodimers. Heterodimer (via HD1 domain) with ZHX2 (via HD1 domain). Also forms a heterodimer with ZHX3 which is a prerequisite for repressor activity. Interacts with ATF7IP and NFYA. Interacts (via homeobox domains) with DNMT3B (via PWWP domain).

The protein localises to the nucleus. In terms of biological role, acts as a transcriptional repressor. Increases DNMT3B-mediated repressive transcriptional activity when DNMT3B is tethered to DNA. May link molecule between DNMT3B and other co-repressor proteins. The sequence is that of Zinc fingers and homeoboxes protein 1 (ZHX1) from Pan troglodytes (Chimpanzee).